The sequence spans 282 residues: Bifunctional protein FolD 2 (282 aa).

Residues 165–167 and serine 190 each bind NADP(+); that span reads GRS.

Belongs to the tetrahydrofolate dehydrogenase/cyclohydrolase family. In terms of assembly, homodimer.

It catalyses the reaction (6R)-5,10-methylene-5,6,7,8-tetrahydrofolate + NADP(+) = (6R)-5,10-methenyltetrahydrofolate + NADPH. The enzyme catalyses (6R)-5,10-methenyltetrahydrofolate + H2O = (6R)-10-formyltetrahydrofolate + H(+). It participates in one-carbon metabolism; tetrahydrofolate interconversion. Catalyzes the oxidation of 5,10-methylenetetrahydrofolate to 5,10-methenyltetrahydrofolate and then the hydrolysis of 5,10-methenyltetrahydrofolate to 10-formyltetrahydrofolate. The sequence is that of Bifunctional protein FolD 2 from Acinetobacter baylyi (strain ATCC 33305 / BD413 / ADP1).